The following is a 331-amino-acid chain: D-alanine--D-alanine ligase (331 aa).

Positions 116 to 316 (KRQWQTHGLP…YEDFVLQLAA (201 aa)) constitute an ATP-grasp domain. ATP is bound at residue 142–197 (ADRLGLPLIVKPAREGSSIGLTKVTSVAELPAAYEKAARLDRDVMAEQFIEGDELT). Mg(2+) is bound by residues Asp269, Glu283, and Asn285.

The protein belongs to the D-alanine--D-alanine ligase family. The cofactor is Mg(2+). Mn(2+) is required as a cofactor.

It localises to the cytoplasm. The enzyme catalyses 2 D-alanine + ATP = D-alanyl-D-alanine + ADP + phosphate + H(+). It functions in the pathway cell wall biogenesis; peptidoglycan biosynthesis. In terms of biological role, cell wall formation. The sequence is that of D-alanine--D-alanine ligase from Ralstonia pickettii (strain 12J).